The primary structure comprises 233 residues: Cysteine-rich venom protein LIO1 (233 aa).

Residues methionine 1–glycine 18 form the signal peptide. In terms of domain architecture, SCP spans valine 37–tyrosine 165. 7 disulfide bridges follow: cysteine 74/cysteine 152, cysteine 91/cysteine 166, cysteine 147/cysteine 163, cysteine 185/cysteine 192, cysteine 188/cysteine 197, cysteine 210/cysteine 228, and cysteine 219/cysteine 232. In terms of domain architecture, ShKT spans cysteine 201–phenylalanine 233.

Belongs to the CRISP family. As to expression, expressed by the venom gland.

It localises to the secreted. Blocks contraction of smooth muscle elicited by high potassium-induced depolarization, but does not block caffeine-stimulated contraction. May target voltage-gated calcium channels on smooth muscle. This Erythrolamprus poecilogyrus (Water snake) protein is Cysteine-rich venom protein LIO1.